A 150-amino-acid polypeptide reads, in one-letter code: uncharacterized protein (150 aa).

Positions 81–90 (TTKPSCSFAQ) are enriched in polar residues. Residues 81 to 125 (TTKPSCSFAQPVTPRTREGAGVRGHRRRRRGSLSLIPWKTSNDKQ) form a disordered region.

This is an uncharacterized protein from Homo sapiens (Human).